The sequence spans 101 residues: NAD(P)H-quinone oxidoreductase subunit 4L, chloroplastic (101 aa).

A run of 3 helical transmembrane segments spans residues 2-22, 32-52, and 61-81; these read MLEH…YGLI, MCLE…SDLF, and VFSI…PAIV.

It belongs to the complex I subunit 4L family. In terms of assembly, NDH is composed of at least 16 different subunits, 5 of which are encoded in the nucleus.

The protein resides in the plastid. The protein localises to the chloroplast thylakoid membrane. The enzyme catalyses a plastoquinone + NADH + (n+1) H(+)(in) = a plastoquinol + NAD(+) + n H(+)(out). The catalysed reaction is a plastoquinone + NADPH + (n+1) H(+)(in) = a plastoquinol + NADP(+) + n H(+)(out). Functionally, NDH shuttles electrons from NAD(P)H:plastoquinone, via FMN and iron-sulfur (Fe-S) centers, to quinones in the photosynthetic chain and possibly in a chloroplast respiratory chain. The immediate electron acceptor for the enzyme in this species is believed to be plastoquinone. Couples the redox reaction to proton translocation, and thus conserves the redox energy in a proton gradient. The sequence is that of NAD(P)H-quinone oxidoreductase subunit 4L, chloroplastic from Nuphar advena (Common spatterdock).